Here is a 121-residue protein sequence, read N- to C-terminus: Small ribosomal subunit protein uS10 (121 aa).

Ser2 bears the N-acetylserine mark. Residues Lys6, Lys8, Lys21, Lys32, and Lys101 each participate in a glycyl lysine isopeptide (Lys-Gly) (interchain with G-Cter in ubiquitin) cross-link.

The protein belongs to the universal ribosomal protein uS10 family. Component of the small ribosomal subunit (SSU). Mature yeast ribosomes consist of a small (40S) and a large (60S) subunit. The 40S small subunit contains 1 molecule of ribosomal RNA (18S rRNA) and 33 different proteins (encoded by 57 genes). The large 60S subunit contains 3 rRNA molecules (25S, 5.8S and 5S rRNA) and 46 different proteins (encoded by 81 genes). Ubiquitinated at Lys-6 and Lys-8 by HEL2, to activate the ribosome quality control (RQC) pathway in response to stalled ribosomes. In terms of processing, N-terminally acetylated by acetyltransferase NatA. Also partially acetylated by NatC.

Its subcellular location is the cytoplasm. Functionally, component of the ribosome, a large ribonucleoprotein complex responsible for the synthesis of proteins in the cell. The small ribosomal subunit (SSU) binds messenger RNAs (mRNAs) and translates the encoded message by selecting cognate aminoacyl-transfer RNA (tRNA) molecules. The large subunit (LSU) contains the ribosomal catalytic site termed the peptidyl transferase center (PTC), which catalyzes the formation of peptide bonds, thereby polymerizing the amino acids delivered by tRNAs into a polypeptide chain. The nascent polypeptides leave the ribosome through a tunnel in the LSU and interact with protein factors that function in enzymatic processing, targeting, and the membrane insertion of nascent chains at the exit of the ribosomal tunnel. This Saccharomyces cerevisiae (strain ATCC 204508 / S288c) (Baker's yeast) protein is Small ribosomal subunit protein uS10.